We begin with the raw amino-acid sequence, 352 residues long: Pre-rRNA-processing protein ipi1 (352 aa).

The protein belongs to the IPI1/TEX10 family. As to quaternary structure, component of the RIX1 complex, composed of rrm-9/ipi1, rix1/ipi2 and ipi3 in a 1:2:2 stoichiometry. The complex interacts (via rix1) with mdn1 (via its hexameric AAA ATPase ring) and the pre-60S ribosome particles.

The protein resides in the nucleus. In terms of biological role, component of the RIX1 complex required for processing of ITS2 sequences from 35S pre-rRNA. The chain is Pre-rRNA-processing protein ipi1 (rrm-9) from Neurospora crassa (strain ATCC 24698 / 74-OR23-1A / CBS 708.71 / DSM 1257 / FGSC 987).